Consider the following 351-residue polypeptide: Outer membrane protein A (351 aa).

A signal peptide spans 1–21 (MKKTAIAIAVALAGFATVAQA). 8 beta stranded membrane-spanning segments follow: residues 27-37 (TWYTGAKLGWS), 55-66 (QLGAGAFGGYQV), 70-78 (VGFEMGYDW), 96-107 (QGVQLTAKLGYP), 112-120 (LDIYTRLGG), 147-156 (PVFAGGVEWA), 161-168 (IATRLEYQ), and 187-195 (LLSLGVSYR). Tandem repeats lie at residues 206-207 (AP), 208-209 (AP), 210-211 (AP), and 212-213 (AP). Positions 206–213 (APAPAPAP) are 4 X 2 AA tandem repeats of A-P. Positions 215 to 343 (VQTKHFTLKS…RVEIEVKGIK (129 aa)) constitute an OmpA-like domain. The cysteines at positions 316 and 328 are disulfide-linked.

This sequence belongs to the outer membrane OOP (TC 1.B.6) superfamily. OmpA family. In terms of assembly, monomer and homodimer.

It is found in the cell outer membrane. Its function is as follows. With TolR probably plays a role in maintaining the position of the peptidoglycan cell wall in the periplasm. Acts as a porin with low permeability that allows slow penetration of small solutes; an internal gate slows down solute passage. In terms of biological role, required for conjugation with F-type plasmids; probably serves as the mating receptor on recipient cells. The sequence is that of Outer membrane protein A from Escherichia fergusonii (strain ATCC 35469 / DSM 13698 / CCUG 18766 / IAM 14443 / JCM 21226 / LMG 7866 / NBRC 102419 / NCTC 12128 / CDC 0568-73).